The following is a 342-amino-acid chain: MNSIDLPSLAQALADSTPTIRHNWTREEAAAIYHAPFADLIFRAQTIHRQSFDANAVQCNQLLNVKTGGCAEDCGYCSQSSHHDTALPASKLMDPAKVIEGAKAARDAGATRYCMGAAWRSPKDRDMAPVIEMVKGVKALGMEACMTLGMLTDDQAKQLADAGLDYYNHNIDTSEEFYSSVVKTRSFGDRLETLEKVQDAGIKVCCGGILGLGEKPTDRVEMLRTLANLPQHPESVPINMLIPIEGTPIAATATPVDPFEFVRTIALARIMMPKSDVRLAAGRTAMSDEMQALCFLAGANSIFIGDTLLTTPNPGDSKDRALFARLGITPRDDLGVHAHGNA.

The region spanning 55 to 274 is the Radical SAM core domain; that stretch reads NAVQCNQLLN…IALARIMMPK (220 aa). Cysteine 70, cysteine 74, and cysteine 77 together coordinate [4Fe-4S] cluster. Residues cysteine 114, cysteine 145, cysteine 205, and arginine 278 each contribute to the [2Fe-2S] cluster site.

This sequence belongs to the radical SAM superfamily. Biotin synthase family. As to quaternary structure, homodimer. Requires [4Fe-4S] cluster as cofactor. [2Fe-2S] cluster serves as cofactor.

The enzyme catalyses (4R,5S)-dethiobiotin + (sulfur carrier)-SH + 2 reduced [2Fe-2S]-[ferredoxin] + 2 S-adenosyl-L-methionine = (sulfur carrier)-H + biotin + 2 5'-deoxyadenosine + 2 L-methionine + 2 oxidized [2Fe-2S]-[ferredoxin]. The protein operates within cofactor biosynthesis; biotin biosynthesis; biotin from 7,8-diaminononanoate: step 2/2. Catalyzes the conversion of dethiobiotin (DTB) to biotin by the insertion of a sulfur atom into dethiobiotin via a radical-based mechanism. This chain is Biotin synthase, found in Rhodopseudomonas palustris (strain BisB5).